The following is a 356-amino-acid chain: S-adenosylmethionine:tRNA ribosyltransferase-isomerase (356 aa).

This sequence belongs to the QueA family. As to quaternary structure, monomer.

Its subcellular location is the cytoplasm. The enzyme catalyses 7-aminomethyl-7-carbaguanosine(34) in tRNA + S-adenosyl-L-methionine = epoxyqueuosine(34) in tRNA + adenine + L-methionine + 2 H(+). It functions in the pathway tRNA modification; tRNA-queuosine biosynthesis. Functionally, transfers and isomerizes the ribose moiety from AdoMet to the 7-aminomethyl group of 7-deazaguanine (preQ1-tRNA) to give epoxyqueuosine (oQ-tRNA). This Histophilus somni (strain 2336) (Haemophilus somnus) protein is S-adenosylmethionine:tRNA ribosyltransferase-isomerase.